Consider the following 515-residue polypeptide: Maturase K (515 aa).

It belongs to the intron maturase 2 family. MatK subfamily.

The protein localises to the plastid. Its subcellular location is the chloroplast. Usually encoded in the trnK tRNA gene intron. Probably assists in splicing its own and other chloroplast group II introns. This is Maturase K from Pinus luchuensis (Ryukyu island pine).